A 208-amino-acid polypeptide reads, in one-letter code: Small ribosomal subunit protein uS4 (208 aa).

The disordered stretch occupies residues 30–51 (KSSLEKRPYAPGQHGQRRSKIS). The S4 RNA-binding domain occupies 98–161 (RRLDNVVYRM…KNNPQVQRSI (64 aa)).

It belongs to the universal ribosomal protein uS4 family. Part of the 30S ribosomal subunit. Contacts protein S5. The interaction surface between S4 and S5 is involved in control of translational fidelity.

Functionally, one of the primary rRNA binding proteins, it binds directly to 16S rRNA where it nucleates assembly of the body of the 30S subunit. Its function is as follows. With S5 and S12 plays an important role in translational accuracy. This is Small ribosomal subunit protein uS4 from Wolinella succinogenes (strain ATCC 29543 / DSM 1740 / CCUG 13145 / JCM 31913 / LMG 7466 / NCTC 11488 / FDC 602W) (Vibrio succinogenes).